The primary structure comprises 206 residues: Large ribosomal subunit protein uL4 (206 aa).

Residues 63 to 97 (MYKQKGTGRARHHSARAPQFRGGGKAHGPVVRSHE) are disordered. A compositionally biased stretch (basic residues) spans 64-77 (YKQKGTGRARHHSA).

This sequence belongs to the universal ribosomal protein uL4 family. As to quaternary structure, part of the 50S ribosomal subunit.

One of the primary rRNA binding proteins, this protein initially binds near the 5'-end of the 23S rRNA. It is important during the early stages of 50S assembly. It makes multiple contacts with different domains of the 23S rRNA in the assembled 50S subunit and ribosome. In terms of biological role, forms part of the polypeptide exit tunnel. The sequence is that of Large ribosomal subunit protein uL4 from Rhizobium etli (strain ATCC 51251 / DSM 11541 / JCM 21823 / NBRC 15573 / CFN 42).